Here is a 145-residue protein sequence, read N- to C-terminus: Putative antiporter subunit mnhG2 (145 aa).

Helical transmembrane passes span 11 to 31 (IAAV…IGIV), 51 to 71 (VLLT…FFSV), and 72 to 92 (RLLL…HLVA).

It belongs to the CPA3 antiporters (TC 2.A.63) subunit G family. As to quaternary structure, may form a heterooligomeric complex that consists of seven subunits: mnhA2, mnhB2, mnhC2, mnhD2, mnhE2, mnhF2 and mnhG2.

The protein localises to the cell membrane. The protein is Putative antiporter subunit mnhG2 (mnhG2) of Staphylococcus aureus (strain COL).